The chain runs to 72 residues: Large ribosomal subunit protein uL29 (72 aa).

This sequence belongs to the universal ribosomal protein uL29 family.

The protein is Large ribosomal subunit protein uL29 of Prochlorococcus marinus subsp. pastoris (strain CCMP1986 / NIES-2087 / MED4).